Reading from the N-terminus, the 208-residue chain is 2-phospho-L-lactate guanylyltransferase (208 aa).

It belongs to the CofC family. In terms of assembly, homodimer.

It carries out the reaction (2S)-2-phospholactate + GTP + H(+) = (2S)-lactyl-2-diphospho-5'-guanosine + diphosphate. Its pathway is cofactor biosynthesis; coenzyme F420 biosynthesis. Guanylyltransferase that catalyzes the activation of (2S)-2-phospholactate (2-PL) as (2S)-lactyl-2-diphospho-5'-guanosine, via the condensation of 2-PL with GTP. It is involved in the biosynthesis of coenzyme F420, a hydride carrier cofactor. The sequence is that of 2-phospho-L-lactate guanylyltransferase from Methanosarcina mazei (strain ATCC BAA-159 / DSM 3647 / Goe1 / Go1 / JCM 11833 / OCM 88) (Methanosarcina frisia).